The sequence spans 261 residues: 5'-nucleotidase SurE (261 aa).

Residues Asp8, Asp9, Ser39, and Asn91 each contribute to the a divalent metal cation site.

It belongs to the SurE nucleotidase family. A divalent metal cation serves as cofactor.

It is found in the cytoplasm. It catalyses the reaction a ribonucleoside 5'-phosphate + H2O = a ribonucleoside + phosphate. Nucleotidase that shows phosphatase activity on nucleoside 5'-monophosphates. This Polaromonas sp. (strain JS666 / ATCC BAA-500) protein is 5'-nucleotidase SurE.